We begin with the raw amino-acid sequence, 161 residues long: Regulator of ribonuclease activity A (161 aa).

Belongs to the RraA family. In terms of assembly, homotrimer. Binds to both RNA-binding sites in the C-terminal region of Rne and to RhlB.

It is found in the cytoplasm. In terms of biological role, globally modulates RNA abundance by binding to RNase E (Rne) and regulating its endonucleolytic activity. Can modulate Rne action in a substrate-dependent manner by altering the composition of the degradosome. Modulates RNA-binding and helicase activities of the degradosome. The chain is Regulator of ribonuclease activity A from Erwinia tasmaniensis (strain DSM 17950 / CFBP 7177 / CIP 109463 / NCPPB 4357 / Et1/99).